The chain runs to 479 residues: Transcription factor CP2-like protein 1 (479 aa).

A Grh/CP2 DB domain is found at 43-280; that stretch reads RLPPLQYVLC…PSPSYNGSPN (238 aa). 2 disordered regions span residues 219-245 and 271-301; these read KPKG…KEKY and PSPS…LPVG. A compositionally biased stretch (basic and acidic residues) spans 221-245; sequence KGADRKQKTDREKMEKRTAQEKEKY. The tract at residues 261–365 is SAM2-like domain; it reads PDVAYQVNSA…IRLFNAIKGR (105 aa). Residues 271–281 are compositionally biased toward polar residues; it reads PSPSYNGSPNS.

The protein belongs to the grh/CP2 family. CP2 subfamily. In terms of assembly, forms homohexamers via its SAM-like domain. Interacts with MTA1; which is indispensable for TFCP2l1-mediated self-renewal-promoting effect and endoderm-inhibiting action. In terms of tissue distribution, highly expressed in placental JEG-3 cells and very low levels of expression in non-steroidogenic cells. No expression was seen in adrenal NCI-H295A cells or in adrenal tissue.

The protein localises to the nucleus. In terms of biological role, transcription factor that facilitates establishment and maintenance of pluripotency in embryonic stem cells (ESCs). With KLF2, acts as the major effector of self-renewal that mediates induction of pluripotency downstream of LIF/STAT3 and Wnt/beta-catenin signaling. Required for normal duct development in the salivary gland and kidney. Coordinates the development of the kidney collecting ducts intercalated (IC) and principal (PC) cells, which regulate acid-base and salt-water homeostasis, respectively. Regulates the expression of IC genes including subunits B1 and D2 of the V-ATPase complex, OXGR1, CA12, SLC4A1, AQP6 and IC-specific transcription factor FOXI1. Also regulates the expression of JAG1 and subsequent notch signaling in the collecting duct. JAG1 initiates notch signaling in PCs but inhibits notch signaling in ICs. Acts as a transcriptional suppressor that may suppress UBP1-mediated transcriptional activation. Modulates the placental expression of CYP11A1. In Homo sapiens (Human), this protein is Transcription factor CP2-like protein 1 (TFCP2L1).